The sequence spans 59 residues: Protein translocase subunit SecE (59 aa).

The chain crosses the membrane as a helical span at residues 33 to 53; that stretch reads GAGIALVGLLGFIIFAVMTFV.

The protein belongs to the SecE/SEC61-gamma family. As to quaternary structure, component of the Sec protein translocase complex. Heterotrimer consisting of SecY (alpha), SecG (beta) and SecE (gamma) subunits. The heterotrimers can form oligomers, although 1 heterotrimer is thought to be able to translocate proteins. Interacts with the ribosome. May interact with SecDF, and other proteins may be involved.

It localises to the cell membrane. Essential subunit of the Sec protein translocation channel SecYEG. Clamps together the 2 halves of SecY. May contact the channel plug during translocation. In Haloarcula marismortui (strain ATCC 43049 / DSM 3752 / JCM 8966 / VKM B-1809) (Halobacterium marismortui), this protein is Protein translocase subunit SecE.